The following is a 274-amino-acid chain: 3-methyl-2-oxobutanoate hydroxymethyltransferase (274 aa).

Aspartate 50 and aspartate 89 together coordinate Mg(2+). Residues 50–51, aspartate 89, and lysine 119 each bind 3-methyl-2-oxobutanoate; that span reads DS. Glutamate 121 provides a ligand contact to Mg(2+). Glutamate 188 acts as the Proton acceptor in catalysis.

It belongs to the PanB family. As to quaternary structure, homodecamer; pentamer of dimers. Mg(2+) is required as a cofactor.

It is found in the cytoplasm. It catalyses the reaction 3-methyl-2-oxobutanoate + (6R)-5,10-methylene-5,6,7,8-tetrahydrofolate + H2O = 2-dehydropantoate + (6S)-5,6,7,8-tetrahydrofolate. It participates in cofactor biosynthesis; (R)-pantothenate biosynthesis; (R)-pantoate from 3-methyl-2-oxobutanoate: step 1/2. In terms of biological role, catalyzes the reversible reaction in which hydroxymethyl group from 5,10-methylenetetrahydrofolate is transferred onto alpha-ketoisovalerate to form ketopantoate. This chain is 3-methyl-2-oxobutanoate hydroxymethyltransferase, found in Methylorubrum populi (strain ATCC BAA-705 / NCIMB 13946 / BJ001) (Methylobacterium populi).